The chain runs to 206 residues: MKPIQARIYLASRSPRRRELLRQIGVQFELLAFRGGERGKDADVDETPHPGEPVERYVERLALTKAEAGCRRLQWRSLPHHAVLGADTTLELEGQIIGKPVDASDAAAILHQLSGRTHRVLTAVALSDGSRTRSRTSISEVRFRPLDDDEIRHYVATGEPMDKAGAYGIQGRAALFIEEIRGSYTGIMGLPLFETAQLLESFGYPL.

Residue aspartate 87 is the Proton acceptor of the active site.

It belongs to the Maf family. YhdE subfamily. Requires a divalent metal cation as cofactor.

The protein localises to the cytoplasm. It catalyses the reaction dTTP + H2O = dTMP + diphosphate + H(+). The catalysed reaction is UTP + H2O = UMP + diphosphate + H(+). Functionally, nucleoside triphosphate pyrophosphatase that hydrolyzes dTTP and UTP. May have a dual role in cell division arrest and in preventing the incorporation of modified nucleotides into cellular nucleic acids. The chain is dTTP/UTP pyrophosphatase from Aromatoleum aromaticum (strain DSM 19018 / LMG 30748 / EbN1) (Azoarcus sp. (strain EbN1)).